Here is a 614-residue protein sequence, read N- to C-terminus: V-type proton ATPase catalytic subunit A (614 aa).

247-254 (GAFGCGKT) is an ATP binding site.

This sequence belongs to the ATPase alpha/beta chains family. In terms of assembly, V-ATPase is a heteromultimeric enzyme made up of two complexes: the ATP-hydrolytic V1 complex and the proton translocation V0 complex. The V1 complex consists of three catalytic AB heterodimers that form a heterohexamer, three peripheral stalks each consisting of EG heterodimers, one central rotor including subunits D and F, and the regulatory subunits C and H. The proton translocation complex V0 consists of the proton transport subunit a, a ring of proteolipid subunits c9c'', rotary subunit d, subunits e and f, and the accessory subunits VhaAC45 and ATP6AP2.

It carries out the reaction ATP + H2O + 4 H(+)(in) = ADP + phosphate + 5 H(+)(out). Its activity is regulated as follows. ATP hydrolysis occurs at the interface between the nucleotide-binding domains of subunits A and B. ATP hydrolysis triggers a conformational change in the subunits D and F, which induces a shift of subunit d. The c-ring is subsequently rotated and results in a continuous proton translocation across the membrane. Catalytic subunit of the V1 complex of vacuolar(H+)-ATPase (V-ATPase), a multisubunit enzyme composed of a peripheral complex (V1) that hydrolyzes ATP and a membrane integral complex (V0) that translocates protons. V-ATPase is responsible for acidifying and maintaining the pH of intracellular compartments and in some cell types, is targeted to the plasma membrane, where it is responsible for acidifying the extracellular environment. In Aedes aegypti (Yellowfever mosquito), this protein is V-type proton ATPase catalytic subunit A (VhaA).